Consider the following 212-residue polypeptide: Imidazole glycerol phosphate synthase subunit HisH 2 (212 aa).

One can recognise a Glutamine amidotransferase type-1 domain in the interval 4 to 211; the sequence is HLGLIDYGMG…LDWLQRGAPI (208 aa). The active-site Nucleophile is Cys82. Catalysis depends on residues His186 and Glu188.

Heterodimer of HisH and HisF.

It is found in the cytoplasm. It carries out the reaction 5-[(5-phospho-1-deoxy-D-ribulos-1-ylimino)methylamino]-1-(5-phospho-beta-D-ribosyl)imidazole-4-carboxamide + L-glutamine = D-erythro-1-(imidazol-4-yl)glycerol 3-phosphate + 5-amino-1-(5-phospho-beta-D-ribosyl)imidazole-4-carboxamide + L-glutamate + H(+). It catalyses the reaction L-glutamine + H2O = L-glutamate + NH4(+). It participates in amino-acid biosynthesis; L-histidine biosynthesis; L-histidine from 5-phospho-alpha-D-ribose 1-diphosphate: step 5/9. Its function is as follows. IGPS catalyzes the conversion of PRFAR and glutamine to IGP, AICAR and glutamate. The HisH subunit provides the glutamine amidotransferase activity that produces the ammonia necessary to HisF for the synthesis of IGP and AICAR. The protein is Imidazole glycerol phosphate synthase subunit HisH 2 (hisH2) of Parasynechococcus marenigrum (strain WH8102).